Reading from the N-terminus, the 310-residue chain is GTPase Era (310 aa).

Residues 17-184 (HSGFVALIGA…LDYLAQALPA (168 aa)) form the Era-type G domain. A G1 region spans residues 25–32 (GAPNAGKS). 25-32 (GAPNAGKS) is a GTP binding site. The tract at residues 51–55 (QTTRA) is G2. The segment at 72–75 (DTPG) is G3. GTP is bound by residues 72–76 (DTPGI) and 134–137 (NKVD). Residues 134 to 137 (NKVD) are G4. Positions 163–165 (VSA) are G5. One can recognise a KH type-2 domain in the interval 215–292 (LHQELPYSSH…HLFLFVKVRE (78 aa)).

Belongs to the TRAFAC class TrmE-Era-EngA-EngB-Septin-like GTPase superfamily. Era GTPase family. In terms of assembly, monomer.

The protein localises to the cytoplasm. Its subcellular location is the cell inner membrane. In terms of biological role, an essential GTPase that binds both GDP and GTP, with rapid nucleotide exchange. Plays a role in 16S rRNA processing and 30S ribosomal subunit biogenesis and possibly also in cell cycle regulation and energy metabolism. This Mesorhizobium japonicum (strain LMG 29417 / CECT 9101 / MAFF 303099) (Mesorhizobium loti (strain MAFF 303099)) protein is GTPase Era.